The chain runs to 613 residues: Penicillin-binding protein activator LpoA (613 aa).

The signal sequence occupies residues 1-29; that stretch reads MNSMLNFTHKRKSVSRLLAPVALAVILAG. Residue Cys-30 is the site of N-palmitoyl cysteine attachment. A lipid anchor (S-diacylglycerol cysteine) is attached at Cys-30.

Belongs to the LpoA family. As to quaternary structure, interacts with PBP1a.

The protein localises to the cell outer membrane. In terms of biological role, regulator of peptidoglycan synthesis that is essential for the function of penicillin-binding protein 1A (PBP1a). This chain is Penicillin-binding protein activator LpoA, found in Photobacterium profundum (strain SS9).